The primary structure comprises 181 residues: GTPase RhebL1 (181 aa).

Residues 30–36 (LEDYDPT), glycine 61, 117–120 (NKAD), and 147–148 (SA) each bind GTP. An Effector region motif is present at residues 33–41 (YDPTVENTY). Threonine 36 provides a ligand contact to Mg(2+). At cysteine 178 the chain carries Cysteine methyl ester. A lipid anchor (S-farnesyl cysteine) is attached at cysteine 178. A propeptide spans 179 to 181 (HLM) (removed in mature form).

This sequence belongs to the small GTPase superfamily. Rheb family. As to quaternary structure, interacts with MTOR.

Its subcellular location is the endomembrane system. The protein resides in the cytoplasm. It carries out the reaction GTP + H2O = GDP + phosphate + H(+). Functionally, binds GTP and exhibits intrinsic GTPase activity. May activate NF-kappa-B-mediated gene transcription. Promotes signal transduction through MTOR, activates RPS6KB1, and is a downstream target of the small GTPase-activating proteins TSC1 and TSC2. This Bos taurus (Bovine) protein is GTPase RhebL1 (RHEBL1).